A 266-amino-acid polypeptide reads, in one-letter code: Putative carbamate hydrolase RutD (266 aa).

Residues 15–128 (AVLLSSGLGG…NAHSARCFDA (114 aa)) enclose the AB hydrolase-1 domain.

This sequence belongs to the AB hydrolase superfamily. Hydrolase RutD family.

The enzyme catalyses carbamate + 2 H(+) = NH4(+) + CO2. In terms of biological role, involved in pyrimidine catabolism. May facilitate the hydrolysis of carbamate, a reaction that can also occur spontaneously. In Variovorax paradoxus (strain S110), this protein is Putative carbamate hydrolase RutD.